The chain runs to 111 residues: V-type proton ATPase subunit G 2 (111 aa).

This sequence belongs to the V-ATPase G subunit family. V-ATPase is a heteromultimeric enzyme composed of a peripheral catalytic V1 complex (components A to H) attached to an integral membrane V0 proton pore complex (components: a, c, c', c'' and d).

In terms of biological role, catalytic subunit of the peripheral V1 complex of vacuolar ATPase (V-ATPase). V-ATPase is responsible for acidifying a variety of intracellular compartments in eukaryotic cells. This chain is V-type proton ATPase subunit G 2 (VATG2), found in Nicotiana tabacum (Common tobacco).